A 342-amino-acid polypeptide reads, in one-letter code: Trans-3-hydroxy-L-proline dehydratase (342 aa).

The active-site Proton acceptor is Ser90. Substrate is bound by residues 91 to 92 (GS), Asp251, and 256 to 257 (GT).

The protein belongs to the proline racemase family.

The catalysed reaction is trans-3-hydroxy-L-proline = 1-pyrroline-2-carboxylate + H2O. Functionally, catalyzes the dehydration of trans-3-hydroxy-L-proline (t3LHyp) to Delta(1)-pyrroline-2-carboxylate (Pyr2C). Displays neither proline racemase activity nor 4-hydroxyproline 2-epimerase activity. This Brucella suis biovar 1 (strain 1330) protein is Trans-3-hydroxy-L-proline dehydratase.